A 29-amino-acid polypeptide reads, in one-letter code: Cytochrome b6-f complex subunit 8 (29 aa).

Residues 3–23 (IISLGWSSLLVVFTFSLSLVV) traverse the membrane as a helical segment.

Belongs to the PetN family. In terms of assembly, the 4 large subunits of the cytochrome b6-f complex are cytochrome b6, subunit IV (17 kDa polypeptide, PetD), cytochrome f and the Rieske protein, while the 4 small subunits are PetG, PetL, PetM and PetN. The complex functions as a dimer.

The protein resides in the plastid. Its subcellular location is the chloroplast thylakoid membrane. Functionally, component of the cytochrome b6-f complex, which mediates electron transfer between photosystem II (PSII) and photosystem I (PSI), cyclic electron flow around PSI, and state transitions. This chain is Cytochrome b6-f complex subunit 8, found in Rhodomonas salina (Cryptomonas salina).